A 190-amino-acid chain; its full sequence is Large ribosomal subunit protein bL17 (190 aa).

Residues 135 to 165 (AKAAPAAEEAPAEEAPAAEEAATEEAPAAEE) are compositionally biased toward low complexity. The disordered stretch occupies residues 135-190 (AKAAPAAEEAPAEEAPAAEEAATEEAPAAEETATEEAAAEEAPAAEEAPAEEKDAK).

This sequence belongs to the bacterial ribosomal protein bL17 family. As to quaternary structure, part of the 50S ribosomal subunit. Contacts protein L32.

This Pseudarthrobacter chlorophenolicus (strain ATCC 700700 / DSM 12829 / CIP 107037 / JCM 12360 / KCTC 9906 / NCIMB 13794 / A6) (Arthrobacter chlorophenolicus) protein is Large ribosomal subunit protein bL17.